Reading from the N-terminus, the 343-residue chain is Cyclin-Y-like protein 1-B (343 aa).

Residues 1–69 (MGNTVTCCVS…ECNPSDHPQA (69 aa)) form a disordered region. Positions 17–28 (AGRDRRVAERGE) are enriched in basic and acidic residues. Positions 145-267 (DIFDEKLHPL…FLELLQFNIN (123 aa)) constitute a Cyclin N-terminal domain.

Belongs to the cyclin family. Cyclin Y subfamily.

The sequence is that of Cyclin-Y-like protein 1-B (ccnyl1-b) from Xenopus laevis (African clawed frog).